The primary structure comprises 489 residues: MTFRNCVAVDLGASSGRVMLARYERECRSLTLREIHRFNNGLHSQNGYVTWDVDSLESAIRLGLNKVCEEGIRIDSIGIDTWGVDFVLLDQQGQRVGLPVAYRDSRTHGLMALAQKQLGKSDIYQRSGIQFLPFNTLYQLRALTEQQPELIPHIAHALLMPDYFSYRLTGKMNWEYTNATTTQLVNINSDDWDETLLAWSGANKAWFGRPTHPGNVIGHWICPQGNEIPVVAVASHDTASAVIASPLNGSRAAYLSSGTWSLMGFESQTPFTNDTALAANITNEGGAEGRYRVLKNIMGLWLLQRVLQERQINDLPALIAATQALPACRFIINPNDDRFINPDEMCSEIQAVCRETAQPIPESDAELGRCIFDSLALLYADVLHELAQLRGEDFSQLHIVGGGCQNTLLNQLCADACGIRVIAGPVEASTLGNIGIQLMALDELNNVDDFRQVVSTTANLTTFTPNPDSEIAHYVAQIHSTRQTKELCA.

Position 13-17 (13-17 (ASSGR)) interacts with ATP. C68 and C222 form a disulfide bridge. Substrate contacts are provided by residues G83 and 236 to 238 (HDT). The Proton acceptor role is filled by D237. An ATP-binding site is contributed by T259. Residue N296 participates in substrate binding. Q304 provides a ligand contact to ATP. C353 and C370 are oxidised to a cystine. Residue G402 coordinates ATP. Residues C413 and C417 are joined by a disulfide bond.

It belongs to the rhamnulokinase family. As to quaternary structure, monomer. Mg(2+) serves as cofactor.

It carries out the reaction L-rhamnulose + ATP = L-rhamnulose 1-phosphate + ADP + H(+). It functions in the pathway carbohydrate degradation; L-rhamnose degradation; glycerone phosphate from L-rhamnose: step 2/3. Its function is as follows. Involved in the catabolism of L-rhamnose (6-deoxy-L-mannose). Catalyzes the transfer of the gamma-phosphate group from ATP to the 1-hydroxyl group of L-rhamnulose to yield L-rhamnulose 1-phosphate. This Escherichia fergusonii (strain ATCC 35469 / DSM 13698 / CCUG 18766 / IAM 14443 / JCM 21226 / LMG 7866 / NBRC 102419 / NCTC 12128 / CDC 0568-73) protein is Rhamnulokinase.